The following is a 384-amino-acid chain: Prostaglandin E synthase 2 (384 aa).

Topologically, residues 1–56 are lumenal; that stretch reads MAQAARLSWVLVSSRCALTEGLLTRPWQPLSAQSRAGFTRVAAGSRGAAVRKGSPR. Residues 57 to 73 traverse the membrane as a helical segment; sequence LLGAAALALGGALGLYH. Over 74-384 the chain is Cytoplasmic; the sequence is TVRWHQRSQD…VHHVNPSCKD (311 aa). Residues 89-192 enclose the Glutaredoxin domain; sequence SAAQLPLSNS…EVITYYPPMK (104 aa). Residues Val-147 and 163–164 contribute to the glutathione site; that span reads DS. The GST C-terminal domain occupies 262 to 376; the sequence is YIVREGKFGA…RAIEEAPSVH (115 aa).

It belongs to the GST superfamily. As to quaternary structure, homodimer. Interacts with EXOSC10. May interact with CEBPB. Synthesized as a Golgi membrane-associated protein, and the proteolytic removal of the N-terminal hydrophobic domain leads to the formation of a mature cytosolic enzyme. In terms of tissue distribution, widely expressed. Expressed in brain, heart, liver, colon and lung.

It localises to the golgi apparatus membrane. It is found in the nucleus. The protein localises to the cytoplasm. The catalysed reaction is prostaglandin H2 = prostaglandin E2. It catalyses the reaction prostaglandin H2 = (12S)-hydroxy-(5Z,8E,10E)-heptadecatrienoate + malonaldehyde. It functions in the pathway lipid metabolism; prostaglandin biosynthesis. With respect to regulation, isomerase activity is increased by sulfhydril compounds. Dithiothreitol (DTT) is most effective, followed by glutathione (GSH) and 2-mercaptoethanol. Functionally, isomerase that catalyzes the conversion of PGH2 into the more stable prostaglandin E2 (PGE2) (in vitro). The biological function and the GSH-dependent property of PTGES2 is still under debate. In vivo, PTGES2 could form a complex with GSH and heme and would not participate in PGE2 synthesis but would catalyze the degradation of prostaglandin E2 H2 (PGH2) to 12(S)-hydroxy-5(Z),8(E),10(E)-heptadecatrienoic acid (HHT) and malondialdehyde (MDA). May also have transactivation activity toward IFN-gamma (IFNG), possibly via an interaction with CEBPB; however, the relevance of transcription activation activity remains unclear. The polypeptide is Prostaglandin E synthase 2 (Ptges2) (Mus musculus (Mouse)).